A 229-amino-acid polypeptide reads, in one-letter code: Multiple organellar RNA editing factor 5, chloroplastic/mitochondrial (229 aa).

Residues 1 to 57 (MAKTLARSTASRITKRLISTSGATTPSPSYILSRRSTPVFSHAVGFISSLNRFTTIR) constitute a chloroplast and mitochondrion transit peptide.

The protein belongs to the MORF family. Homodimer and heterodimers with MORF8/RIP1, MORF3/RIP3, MORF6/RIP6, MORF7/RIP7 and MORF9/RIP9.

The protein resides in the mitochondrion. The protein localises to the plastid. Its subcellular location is the chloroplast. Functionally, involved in organellar RNA editing. Required for the processing of few RNA editing sites in mitochondria. This is Multiple organellar RNA editing factor 5, chloroplastic/mitochondrial from Arabidopsis thaliana (Mouse-ear cress).